We begin with the raw amino-acid sequence, 299 residues long: Oxygen-dependent coproporphyrinogen-III oxidase (299 aa).

S92 contributes to the substrate binding site. Mn(2+)-binding residues include H96 and H106. The active-site Proton donor is H106. A substrate-binding site is contributed by 108–110 (NVR). The Mn(2+) site is built by H145 and H175. The important for dimerization stretch occupies residues 240–275 (YVEFNLVWDRGTLFGLQTGGRTESILMSMPPLVRWE). 258 to 260 (GGR) contributes to the substrate binding site.

It belongs to the aerobic coproporphyrinogen-III oxidase family. In terms of assembly, homodimer. It depends on Mn(2+) as a cofactor.

The protein resides in the cytoplasm. It carries out the reaction coproporphyrinogen III + O2 + 2 H(+) = protoporphyrinogen IX + 2 CO2 + 2 H2O. The protein operates within porphyrin-containing compound metabolism; protoporphyrin-IX biosynthesis; protoporphyrinogen-IX from coproporphyrinogen-III (O2 route): step 1/1. Involved in the heme biosynthesis. Catalyzes the aerobic oxidative decarboxylation of propionate groups of rings A and B of coproporphyrinogen-III to yield the vinyl groups in protoporphyrinogen-IX. The chain is Oxygen-dependent coproporphyrinogen-III oxidase from Escherichia coli (strain SE11).